The chain runs to 244 residues: MYRPFLEHLQQKLQSSFDLQSLTIPAGLDYRISERGRESTTIRSWCYTCSELRKIRYTYIDGGEHAQVFNSVIYPAHRYDLPLLGIDLLAFGKKKNLIVLDFQPLFRDKAYLARYIEPMRILRERYGDVAQDVEMKFYDANQYFSKYLLFARTDAETVAGRVFTAYCDYLDLYWQLLASAAPLGDAQDIRRIVKAQKDYDQYSADRDPASGLFSSYFGHEWAERFLYEFLFEDAVPLAVGQPGR.

The protein belongs to the HY2 family.

It catalyses the reaction 15,16-dihydrobiliverdin + oxidized 2[4Fe-4S]-[ferredoxin] = biliverdin IXalpha + reduced 2[4Fe-4S]-[ferredoxin] + 2 H(+). In terms of biological role, catalyzes the two-electron reduction of biliverdin IX-alpha at the C15 methine bridge. The polypeptide is 15,16-dihydrobiliverdin:ferredoxin oxidoreductase (pebA) (Gloeobacter violaceus (strain ATCC 29082 / PCC 7421)).